The following is a 485-amino-acid chain: Bindin (485 aa).

The signal sequence occupies residues 1–20; it reads MGFHQISVIIVVLALASARA. The propeptide occupies 21–247; sequence ADEFPSHTDT…DSERGARKKR (227 aa). 3 disordered regions span residues 157–195, 219–273, and 305–331; these read GETR…DLAP, ISGH…PAQQ, and GGGQ…SDSL. A compositionally biased stretch (basic and acidic residues) spans 172 to 192; the sequence is DVSKRASPRKGDEPAGHKLKD. Positions 250–264 are enriched in polar residues; it reads NQGNYPQAMNPQSRG. Over residues 317–331 the composition is skewed to acidic residues; that stretch reads AEADNADYDEYSDSL. The fucose-binding domain stretch occupies residues 371–379; that stretch reads LRHLRHHSN. The interval 459 to 485 is disordered; it reads QQGMGGVPQRMGGQPQGNAYNQGYRQG. The segment covering 465-475 has biased composition (low complexity); the sequence is VPQRMGGQPQG. Positions 476-485 are enriched in polar residues; that stretch reads NAYNQGYRQG.

It belongs to the bindin family.

It is found in the cytoplasmic vesicle. Its subcellular location is the secretory vesicle. The protein localises to the acrosome lumen. Functionally, species-specific sea urchin sperm protein required for adhesion of sperm to the egg surface during fertilization. Bindin coats the acrosomal process after it is externalized by the acrosome reaction. It binds to sulfated, fucose-containing polysaccharides on the vitelline layer receptor proteoglycans which cover the egg plasma membrane. This is Bindin from Mesocentrotus franciscanus (Giant red sea urchin).